We begin with the raw amino-acid sequence, 255 residues long: Protein DAL82 (255 aa).

A disordered region spans residues proline 87–threonine 149. A compositionally biased stretch (basic and acidic residues) spans proline 128 to serine 138.

Functionally, positive regulator of allophanate-induced genes in S.cerevisiae. The protein is Protein DAL82 (DAL82) of Saccharomyces cerevisiae (strain ATCC 204508 / S288c) (Baker's yeast).